A 66-amino-acid chain; its full sequence is Surface composition regulator (66 aa).

The protein belongs to the GlgS family.

Functionally, major determinant of cell surface composition. Negatively regulates motility, adhesion and synthesis of biofilm exopolysaccharides. This chain is Surface composition regulator, found in Shigella flexneri.